The chain runs to 189 residues: MPDDPIQDILDEADEEMEESVSYMRSELRTIRAGRASPAMLENVTVEYYGSQTPLEQVASVSAPQPDLIVVQPFDRNAIENIERGIMKADLGLNPNNDGEKIRIPIPPLSEERRKELVETSRERAEETKISIRNIRRDAKNEIQNVVEAENFSEDVLYGAEEDLQDITDAHTETVEGLLEQKTEQIMDV.

It belongs to the RRF family.

The protein resides in the cytoplasm. Functionally, responsible for the release of ribosomes from messenger RNA at the termination of protein biosynthesis. May increase the efficiency of translation by recycling ribosomes from one round of translation to another. The polypeptide is Ribosome-recycling factor (Salinibacter ruber (strain DSM 13855 / M31)).